The primary structure comprises 515 residues: 1-pyrroline-5-carboxylate dehydrogenase (515 aa).

Residues Glu-286 and Cys-320 contribute to the active site.

Belongs to the aldehyde dehydrogenase family. RocA subfamily.

It catalyses the reaction L-glutamate 5-semialdehyde + NAD(+) + H2O = L-glutamate + NADH + 2 H(+). It participates in amino-acid degradation; L-proline degradation into L-glutamate; L-glutamate from L-proline: step 2/2. This is 1-pyrroline-5-carboxylate dehydrogenase from Geobacillus sp. (strain WCH70).